The sequence spans 109 residues: Thiosulfate sulfurtransferase GlpE (109 aa).

One can recognise a Rhodanese domain in the interval 16–104; it reads RSNGAVVVDI…WRATFPSETA (89 aa). Catalysis depends on cysteine 64, which acts as the Cysteine persulfide intermediate.

The protein belongs to the GlpE family.

It is found in the cytoplasm. The catalysed reaction is thiosulfate + hydrogen cyanide = thiocyanate + sulfite + 2 H(+). It carries out the reaction thiosulfate + [thioredoxin]-dithiol = [thioredoxin]-disulfide + hydrogen sulfide + sulfite + 2 H(+). Transferase that catalyzes the transfer of sulfur from thiosulfate to thiophilic acceptors such as cyanide or dithiols. May function in a CysM-independent thiosulfate assimilation pathway by catalyzing the conversion of thiosulfate to sulfite, which can then be used for L-cysteine biosynthesis. The sequence is that of Thiosulfate sulfurtransferase GlpE from Ectopseudomonas mendocina (strain ymp) (Pseudomonas mendocina).